Reading from the N-terminus, the 132-residue chain is Small ribosomal subunit protein uS11 (132 aa).

This sequence belongs to the universal ribosomal protein uS11 family. In terms of assembly, part of the 30S ribosomal subunit. Interacts with proteins S7 and S18. Binds to IF-3.

Its function is as follows. Located on the platform of the 30S subunit, it bridges several disparate RNA helices of the 16S rRNA. Forms part of the Shine-Dalgarno cleft in the 70S ribosome. This chain is Small ribosomal subunit protein uS11, found in Chlamydia felis (strain Fe/C-56) (Chlamydophila felis).